A 414-amino-acid chain; its full sequence is Putative gustatory receptor 47b (414 aa).

Residues 1–5 (MQRDD) lie on the Cytoplasmic side of the membrane. The chain crosses the membrane as a helical span at residues 6–26 (GFVYCYGNLYSLLLYWGLVTI). The Extracellular portion of the chain corresponds to 27–40 (RVRSPDRGGAFSNR). A helical membrane pass occupies residues 41–61 (WTVCYALFTRSFMVICFMATV). Topologically, residues 62 to 142 (MTKLRDPEMS…QWNYRRARLK (81 aa)) are cytoplasmic. A helical transmembrane segment spans residues 143-163 (YWYGTVIVGFCFFSFSISLIF). The Extracellular segment spans residues 164-182 (DTTRCTCGIPSTLLMAFTY). Residues 183–203 (TLLTSSVGLLGFVHIGIMDFI) form a helical membrane-spanning segment. The Cytoplasmic segment spans residues 204–249 (RVRLRLVQQLLHQLYQADDSSEVHERIAYLFEMSKRCSFLLAELNG). Residues 250-270 (VFGFAAAAGIFYDFTIMTCFV) traverse the membrane as a helical segment. Residues 271–291 (YVICQKLLEREPWDPEYVYML) are Extracellular-facing. The helical transmembrane segment at 292–312 (LHVAIHTYKVVITSTYGYLLL) threads the bilayer. Residues 313-364 (REKRNCMHLLSQYSRYFSGQDVARRKTEDFQHWRMHNRQAAMVGSTTLLSVS) lie on the Cytoplasmic side of the membrane. The chain crosses the membrane as a helical span at residues 365-385 (TIYLVYNGMANYVIILVQLLF). The Extracellular segment spans residues 386-414 (QQQQIKDHQLTSGKDVDIVGPMGPITHMD).

Belongs to the insect chemoreceptor superfamily. Gustatory receptor (GR) family. Gr57a subfamily. In terms of tissue distribution, expressed in neurons of the terminal external chemosensory organ of larvae.

It localises to the cell membrane. In terms of biological role, probable gustatory receptor which mediates acceptance or avoidance behavior, depending on its substrates. The sequence is that of Putative gustatory receptor 47b (Gr47b) from Drosophila melanogaster (Fruit fly).